The sequence spans 43 residues: Protein PsbN (43 aa).

The chain crosses the membrane as a helical span at residues 5–27 (TLIAISISGLLVSFTGYALYTAF).

This sequence belongs to the PsbN family.

It is found in the plastid. It localises to the chloroplast thylakoid membrane. In terms of biological role, may play a role in photosystem I and II biogenesis. This is Protein PsbN from Phaseolus vulgaris (Kidney bean).